A 234-amino-acid chain; its full sequence is MTKIAMANFKSAMPVFKSHAYLKELEKTLKPQHFDRVFVFPDFLGLLPNAFLHFTLGAQNAYPRDCGAFTGEITSKHLEELKIHTLLIGHSERRVLLKESPSFLKEKFDFFKGKNFKIVYCIGEDLTTREKGFRAVKEFLSEQLENIDLNYSNLIVAYEPIWAIGTKKSASLEDIYLTHGFLKQILNQKTPLLYGGSVNAQNAKEILGIDSVDGLLIGSASLELENFKTIISFL.

8-10 (NFK) is a substrate binding site. His90 serves as the catalytic Electrophile. The active-site Proton acceptor is the Glu159. Substrate contacts are provided by Gly165 and Ser197.

The protein belongs to the triosephosphate isomerase family. In terms of assembly, homodimer.

It localises to the cytoplasm. It carries out the reaction D-glyceraldehyde 3-phosphate = dihydroxyacetone phosphate. The protein operates within carbohydrate biosynthesis; gluconeogenesis. Its pathway is carbohydrate degradation; glycolysis; D-glyceraldehyde 3-phosphate from glycerone phosphate: step 1/1. Its function is as follows. Involved in the gluconeogenesis. Catalyzes stereospecifically the conversion of dihydroxyacetone phosphate (DHAP) to D-glyceraldehyde-3-phosphate (G3P). The protein is Triosephosphate isomerase of Helicobacter pylori (strain J99 / ATCC 700824) (Campylobacter pylori J99).